The following is a 310-amino-acid chain: HPr kinase/phosphorylase (310 aa).

Active-site residues include histidine 138 and lysine 159. 153 to 160 (GGSGVGKS) serves as a coordination point for ATP. Serine 160 contacts Mg(2+). Residue aspartate 177 is the Proton acceptor; for phosphorylation activity. Proton donor; for dephosphorylation activity of the active site. The important for the catalytic mechanism of both phosphorylation and dephosphorylation stretch occupies residues 201-210 (LEIRGLGIIN). A Mg(2+)-binding site is contributed by glutamate 202. Residue arginine 243 is part of the active site. The segment at 264-269 (PVRPGR) is important for the catalytic mechanism of dephosphorylation.

The protein belongs to the HPrK/P family. As to quaternary structure, homohexamer. Mg(2+) serves as cofactor.

It catalyses the reaction [HPr protein]-L-serine + ATP = [HPr protein]-O-phospho-L-serine + ADP + H(+). It carries out the reaction [HPr protein]-O-phospho-L-serine + phosphate + H(+) = [HPr protein]-L-serine + diphosphate. Catalyzes the ATP- as well as the pyrophosphate-dependent phosphorylation of a specific serine residue in HPr, a phosphocarrier protein of the phosphoenolpyruvate-dependent sugar phosphotransferase system (PTS). HprK/P also catalyzes the pyrophosphate-producing, inorganic phosphate-dependent dephosphorylation (phosphorolysis) of seryl-phosphorylated HPr (P-Ser-HPr). The two antagonistic activities of HprK/P are regulated by several intracellular metabolites, which change their concentration in response to the absence or presence of rapidly metabolisable carbon sources (glucose, fructose, etc.) in the growth medium. Also phosphorylates/dephosphorylates the HPr-like catabolite repression protein crh on a specific serine residue. Therefore, by controlling the phosphorylation state of HPr and crh, HPrK/P is a sensor enzyme that plays a major role in the regulation of carbon metabolism and sugar transport: it mediates carbon catabolite repression (CCR), and regulates PTS-catalyzed carbohydrate uptake and inducer exclusion. This chain is HPr kinase/phosphorylase, found in Shouchella clausii (strain KSM-K16) (Alkalihalobacillus clausii).